Here is an 88-residue protein sequence, read N- to C-terminus: Small ribosomal subunit protein bS20 (88 aa).

The interval 1-21 (MANTTSAKKATRKIARRTAVN) is disordered.

This sequence belongs to the bacterial ribosomal protein bS20 family.

Functionally, binds directly to 16S ribosomal RNA. The chain is Small ribosomal subunit protein bS20 from Sinorhizobium fredii (strain NBRC 101917 / NGR234).